The chain runs to 92 residues: Protein S100-A6 (92 aa).

EF-hand domains follow at residues 12–47 (LVAIFHKYSSREGDKNTLSKGELKELIQKELTIGAE) and 48–83 (LEDSEIAKLLDDLDQNKDQVVNFQEYVTFLGALAMI). The Ca(2+) site is built by threonine 28 and glutamate 33. At lysine 40 the chain carries N6-acetyllysine. 4 residues coordinate Ca(2+): aspartate 61, asparagine 63, aspartate 65, and glutamate 72.

This sequence belongs to the S-100 family. In terms of assembly, homodimer; head to tail assembly of 2 subunits. Interacts with CACYBP in a calcium-dependent manner. Interacts with ANXA2 and ANXA11 (via N-terminus). Interacts with SUGT1. Interacts with TP53; has higher affinity for TP53 that is phosphorylated on its N-terminal domain, and lower affinity for TP53 that is phosphorylated on its C-terminal domain. Interacts with tropomyosin. Interacts with FKBP4. Interacts with PPP5C (via TPR repeats); the interaction is calcium-dependent and modulates PPP5C activity. Interacts with TPPP; this interaction inhibits TPPP dimerization.

The protein resides in the nucleus envelope. It is found in the cytoplasm. The protein localises to the cell membrane. Functionally, may function as calcium sensor and modulator, contributing to cellular calcium signaling. May function by interacting with other proteins, such as TPR-containing proteins, and indirectly play a role in many physiological processes such as the reorganization of the actin cytoskeleton and in cell motility. Binds 2 calcium ions. Calcium binding is cooperative. The protein is Protein S100-A6 (S100A6) of Equus caballus (Horse).